We begin with the raw amino-acid sequence, 459 residues long: Cysteine--tRNA ligase (459 aa).

Cys-29 serves as a coordination point for Zn(2+). Positions 31 to 41 (PTVYDRAHIGN) match the 'HIGH' region motif. Zn(2+) contacts are provided by Cys-209, His-234, and Glu-238. A 'KMSKS' region motif is present at residues 266-270 (KMSKS). Lys-269 contacts ATP.

Belongs to the class-I aminoacyl-tRNA synthetase family. As to quaternary structure, monomer. Requires Zn(2+) as cofactor.

It localises to the cytoplasm. The catalysed reaction is tRNA(Cys) + L-cysteine + ATP = L-cysteinyl-tRNA(Cys) + AMP + diphosphate. This chain is Cysteine--tRNA ligase, found in Paramagnetospirillum magneticum (strain ATCC 700264 / AMB-1) (Magnetospirillum magneticum).